The sequence spans 408 residues: Biphenyl dioxygenase system ferredoxin--NAD(+) reductase component (408 aa).

Residue 4–35 (TIAIIGAGLAGSTAARALRAQGYEGRIHLLGD) participates in FAD binding. 145–173 (SLVIVGGGLIGCEVATTARKLSVHVTILE) provides a ligand contact to NAD(+).

It belongs to the bacterial ring-hydroxylating dioxygenase ferredoxin reductase family. In terms of assembly, this dioxygenase system consists of four proteins: the two subunits of the hydroxylase component (BphA and BphE), a ferredoxin (BphF) and a ferredoxin reductase (BphG). FAD serves as cofactor.

It carries out the reaction 2 reduced [2Fe-2S]-[ferredoxin] + NAD(+) + H(+) = 2 oxidized [2Fe-2S]-[ferredoxin] + NADH. Its pathway is xenobiotic degradation; biphenyl degradation. Its function is as follows. Part of the electron transfer component of biphenyl dioxygenase, transfers electrons from ferredoxin (BphF) to NADH. This chain is Biphenyl dioxygenase system ferredoxin--NAD(+) reductase component (bphG), found in Paraburkholderia xenovorans (strain LB400).